Here is an 88-residue protein sequence, read N- to C-terminus: UPF0250 protein Sfri_0694 (88 aa).

It belongs to the UPF0250 family.

This Shewanella frigidimarina (strain NCIMB 400) protein is UPF0250 protein Sfri_0694.